The chain runs to 397 residues: 1-deoxy-D-xylulose 5-phosphate reductoisomerase (397 aa).

Residues Thr12, Gly13, Ser14, Ile15, Gly38, Lys39, Asn40, and Asn126 each contribute to the NADPH site. Lys127 provides a ligand contact to 1-deoxy-D-xylulose 5-phosphate. Glu128 serves as a coordination point for NADPH. Asp152 contributes to the Mn(2+) binding site. Ser153, Glu154, Ser188, and His211 together coordinate 1-deoxy-D-xylulose 5-phosphate. Glu154 is a Mn(2+) binding site. Gly217 serves as a coordination point for NADPH. 1-deoxy-D-xylulose 5-phosphate-binding residues include Ser224, Asn229, Lys230, and Glu233. Glu233 is a binding site for Mn(2+).

Belongs to the DXR family. Mg(2+) serves as cofactor. Requires Mn(2+) as cofactor.

It carries out the reaction 2-C-methyl-D-erythritol 4-phosphate + NADP(+) = 1-deoxy-D-xylulose 5-phosphate + NADPH + H(+). It participates in isoprenoid biosynthesis; isopentenyl diphosphate biosynthesis via DXP pathway; isopentenyl diphosphate from 1-deoxy-D-xylulose 5-phosphate: step 1/6. In terms of biological role, catalyzes the NADPH-dependent rearrangement and reduction of 1-deoxy-D-xylulose-5-phosphate (DXP) to 2-C-methyl-D-erythritol 4-phosphate (MEP). The chain is 1-deoxy-D-xylulose 5-phosphate reductoisomerase from Haemophilus influenzae (strain 86-028NP).